Consider the following 307-residue polypeptide: 4-hydroxythreonine-4-phosphate dehydrogenase (307 aa).

His-126 and Thr-127 together coordinate substrate. A divalent metal cation-binding residues include His-156, His-195, and His-251. Substrate-binding residues include Lys-259, Asn-268, and Arg-277.

The protein belongs to the PdxA family. As to quaternary structure, homodimer. It depends on Zn(2+) as a cofactor. The cofactor is Mg(2+). Co(2+) serves as cofactor.

Its subcellular location is the cytoplasm. It catalyses the reaction 4-(phosphooxy)-L-threonine + NAD(+) = 3-amino-2-oxopropyl phosphate + CO2 + NADH. The protein operates within cofactor biosynthesis; pyridoxine 5'-phosphate biosynthesis; pyridoxine 5'-phosphate from D-erythrose 4-phosphate: step 4/5. Catalyzes the NAD(P)-dependent oxidation of 4-(phosphooxy)-L-threonine (HTP) into 2-amino-3-oxo-4-(phosphooxy)butyric acid which spontaneously decarboxylates to form 3-amino-2-oxopropyl phosphate (AHAP). The protein is 4-hydroxythreonine-4-phosphate dehydrogenase of Helicobacter pylori (strain ATCC 700392 / 26695) (Campylobacter pylori).